The primary structure comprises 283 residues: GTP cyclohydrolase MptA (283 aa).

This sequence belongs to the GTP cyclohydrolase IV family. As to quaternary structure, homodimer. The cofactor is Fe(2+).

It catalyses the reaction GTP + H2O = 7,8-dihydroneopterin 2',3'-cyclic phosphate + formate + diphosphate + H(+). Its pathway is cofactor biosynthesis; 5,6,7,8-tetrahydromethanopterin biosynthesis. Its function is as follows. Converts GTP to 7,8-dihydro-D-neopterin 2',3'-cyclic phosphate, the first intermediate in the biosynthesis of coenzyme methanopterin. This is GTP cyclohydrolase MptA from Aeropyrum pernix (strain ATCC 700893 / DSM 11879 / JCM 9820 / NBRC 100138 / K1).